The following is a 528-amino-acid chain: Peptide chain release factor 3 (528 aa).

One can recognise a tr-type G domain in the interval 10–279 (AKRRTFAIIS…GLVEWAPAPM (270 aa)). GTP is bound by residues 19–26 (SHPDAGKT), 87–91 (DTPGH), and 141–144 (NKLD).

It belongs to the TRAFAC class translation factor GTPase superfamily. Classic translation factor GTPase family. PrfC subfamily.

It localises to the cytoplasm. Increases the formation of ribosomal termination complexes and stimulates activities of RF-1 and RF-2. It binds guanine nucleotides and has strong preference for UGA stop codons. It may interact directly with the ribosome. The stimulation of RF-1 and RF-2 is significantly reduced by GTP and GDP, but not by GMP. This is Peptide chain release factor 3 from Escherichia coli O1:K1 / APEC.